Reading from the N-terminus, the 327-residue chain is Methionyl-tRNA formyltransferase (327 aa).

121–124 (SLLP) provides a ligand contact to (6S)-5,6,7,8-tetrahydrofolate.

It belongs to the Fmt family.

The catalysed reaction is L-methionyl-tRNA(fMet) + (6R)-10-formyltetrahydrofolate = N-formyl-L-methionyl-tRNA(fMet) + (6S)-5,6,7,8-tetrahydrofolate + H(+). Functionally, attaches a formyl group to the free amino group of methionyl-tRNA(fMet). The formyl group appears to play a dual role in the initiator identity of N-formylmethionyl-tRNA by promoting its recognition by IF2 and preventing the misappropriation of this tRNA by the elongation apparatus. The sequence is that of Methionyl-tRNA formyltransferase from Burkholderia mallei (strain ATCC 23344).